The following is a 1318-amino-acid chain: DNA-directed RNA polymerase subunit beta' (1318 aa).

The Zn(2+) site is built by cysteine 60, cysteine 62, cysteine 75, and cysteine 78. Residues aspartate 535, aspartate 537, and aspartate 539 each contribute to the Mg(2+) site. 4 residues coordinate Zn(2+): cysteine 890, cysteine 967, cysteine 974, and cysteine 977.

The protein belongs to the RNA polymerase beta' chain family. In terms of assembly, the RNAP catalytic core consists of 2 alpha, 1 beta, 1 beta' and 1 omega subunit. When a sigma factor is associated with the core the holoenzyme is formed, which can initiate transcription. The cofactor is Mg(2+). Zn(2+) is required as a cofactor.

It catalyses the reaction RNA(n) + a ribonucleoside 5'-triphosphate = RNA(n+1) + diphosphate. Its function is as follows. DNA-dependent RNA polymerase catalyzes the transcription of DNA into RNA using the four ribonucleoside triphosphates as substrates. The protein is DNA-directed RNA polymerase subunit beta' of Rhodococcus erythropolis (strain PR4 / NBRC 100887).